Here is a 248-residue protein sequence, read N- to C-terminus: Cell division protein ZapD (248 aa).

This sequence belongs to the ZapD family. Interacts with FtsZ.

The protein localises to the cytoplasm. Cell division factor that enhances FtsZ-ring assembly. Directly interacts with FtsZ and promotes bundling of FtsZ protofilaments, with a reduction in FtsZ GTPase activity. This is Cell division protein ZapD from Aliivibrio salmonicida (strain LFI1238) (Vibrio salmonicida (strain LFI1238)).